Reading from the N-terminus, the 316-residue chain is dTDP-4-dehydro-6-deoxyglucose reductase (316 aa).

Position 16–17 (16–17 (FI)) interacts with NAD(+). Catalysis depends on Y151, which acts as the Proton acceptor. K155 is an NAD(+) binding site.

It belongs to the NAD(P)-dependent epimerase/dehydratase family.

It catalyses the reaction dTDP-alpha-D-fucose + NAD(+) = dTDP-4-dehydro-6-deoxy-alpha-D-glucose + NADH + H(+). It carries out the reaction dTDP-alpha-D-fucose + NADP(+) = dTDP-4-dehydro-6-deoxy-alpha-D-glucose + NADPH + H(+). It participates in bacterial outer membrane biogenesis; LPS O-antigen biosynthesis. Inhibited by Cu(2+), while other divalent cations such as Ca(2+), Co(2+), Fe(2+), Mn(2+) and Mg(2+) have no obvious effects on enzyme activity. Catalyzes the stereospecific reduction of the C-4 keto group of dTDP-4-dehydro-6-deoxy-D-glucose, leading to dTDP-D-fucopyranose. This is a step in the biosynthesis of D-fucofuranose, a component of E.coli O52 O antigen. Is more efficient using NADH than NADPH as cosubstrate. This is dTDP-4-dehydro-6-deoxyglucose reductase (fcf1) from Escherichia coli.